Consider the following 907-residue polypeptide: Probable ubiquitin-conjugating enzyme E2 24 (907 aa).

2 disordered regions span residues 1–23 (MEMS…EHEE) and 485–509 (SSTV…EASS). A compositionally biased stretch (polar residues) spans 495 to 509 (QDLSQKISQSDEASS). In terms of domain architecture, UBC core spans 662 to 822 (SWVKKVQQEW…AFLITCKSMI (161 aa)). Residue Cys-748 is the Glycyl thioester intermediate of the active site.

The protein belongs to the ubiquitin-conjugating enzyme family. In terms of assembly, interacts with PHO1. Interacts with NLA. As to expression, expressed in the vascular tissues of cotyledons, leaves, roots, sepals, filaments, anthers and junctions between the inflorescence stems and siliques.

It localises to the golgi apparatus membrane. The protein localises to the endoplasmic reticulum membrane. It catalyses the reaction S-ubiquitinyl-[E1 ubiquitin-activating enzyme]-L-cysteine + [E2 ubiquitin-conjugating enzyme]-L-cysteine = [E1 ubiquitin-activating enzyme]-L-cysteine + S-ubiquitinyl-[E2 ubiquitin-conjugating enzyme]-L-cysteine.. The protein operates within protein modification; protein ubiquitination. In terms of biological role, E2 ubiquitin-protein ligase that mediates E1-dependent protein ubiquitination. Mediates PHO1 degradation through multivesicular body-mediated vacuolar proteolysis in response to inorganic phosphate (Pi) availability. Negatively regulates the protein abundance of PHF1 and PHT1s under Pi-sufficient conditions by facilitating the degradation of PHT1 proteins at the endomembrane. Functions cooperatively with NLA to regulate the abundance of the inorganic phosphate (Pi) transporters PHT1-1, PHT1-2 and PHT1-3 in different subcellular compartments. Regulates Pi homeostasis by mediating, cooperatively with NLA, polyubiquitination of PHT1-4 and its targeting for degradation. This chain is Probable ubiquitin-conjugating enzyme E2 24, found in Arabidopsis thaliana (Mouse-ear cress).